Consider the following 1123-residue polypeptide: Rabphilin-1 (1123 aa).

Basic residues predominate over residues 1–17 (MTKSTKLRHCKQKKKKP). Disordered stretches follow at residues 1-56 (MTKS…GSRS) and 88-140 (SAHN…PSTH). Residues 36-46 (DAATTTSTTDA) show a composition bias toward low complexity. The 127-residue stretch at 215–341 (KAQTGSITAA…KKSGAWFYKE (127 aa)) folds into the RabBD domain. Residues 263-328 (GNGVTHCLLC…LCKICSEARE (66 aa)) form an FYVE-type zinc finger. C269, C272, C288, C291, C296, C300, C320, and C323 together coordinate Zn(2+). Polar residues-rich tracts occupy residues 365–375 (PNASSAATPLS), 387–400 (TMPSTSSCQMTTPK), 410–428 (PGLQMNGGPTSPLPNGTRR), and 487–497 (ASSSDGESFVQ). Disordered regions lie at residues 365–710 (PNAS…VGSA), 737–779 (TSRA…LRTS), and 796–818 (HIVSSEPTSSTTSNQNHTSVPIP). Residues 531 to 541 (SRREANMERFS) are compositionally biased toward basic and acidic residues. Residues 563–574 (ESRPSTRSTSPR) show a composition bias toward low complexity. 2 stretches are compositionally biased toward polar residues: residues 605 to 632 (VVQSDHSNPQQSGLTCSSSSLTPLQQQA) and 649 to 666 (PDRTTSRVAQSASGTSLV). Residues 742-753 (SPLAASSSFLSS) are compositionally biased toward low complexity. Residues 756-768 (DDTKQKNRRRDGV) show a composition bias toward basic and acidic residues. Over residues 803 to 818 (TSSTTSNQNHTSVPIP) the composition is skewed to low complexity. C2 domains lie at 844–967 (SLGS…NLYL) and 984–1103 (DRGK…RQWI). D875, D881, D936, D938, D943, D1015, D1021, D1075, D1077, and D1083 together coordinate Ca(2+).

Requires Ca(2+) as cofactor.

The protein resides in the synapse. Its function is as follows. Rab-3 effector. This chain is Rabphilin-1 (rbf-1), found in Caenorhabditis elegans.